The chain runs to 310 residues: Methionyl-tRNA formyltransferase (310 aa).

109–112 is a binding site for (6S)-5,6,7,8-tetrahydrofolate; that stretch reads SLLP. The interval 283 to 310 is disordered; that stretch reads QPQGKKAMPAADWARGARIGDGERFGDD. Residues 300–310 are compositionally biased toward basic and acidic residues; it reads RIGDGERFGDD.

This sequence belongs to the Fmt family.

It catalyses the reaction L-methionyl-tRNA(fMet) + (6R)-10-formyltetrahydrofolate = N-formyl-L-methionyl-tRNA(fMet) + (6S)-5,6,7,8-tetrahydrofolate + H(+). Attaches a formyl group to the free amino group of methionyl-tRNA(fMet). The formyl group appears to play a dual role in the initiator identity of N-formylmethionyl-tRNA by promoting its recognition by IF2 and preventing the misappropriation of this tRNA by the elongation apparatus. This chain is Methionyl-tRNA formyltransferase, found in Thermobifida fusca (strain YX).